Consider the following 248-residue polypeptide: Ras-related protein RSR1 (248 aa).

10-17 is a binding site for GTP; sequence GAGGVGKS. Positions 32 to 40 match the Effector region motif; the sequence is YDPTIEDSY. GTP-binding positions include 57–61 and 116–119; these read DTAGV and NKCD. The tract at residues 182-248 is disordered; sequence LQKQQQQQQQ…SSGSKFCTII (67 aa). Residues 184–214 are compositionally biased toward low complexity; the sequence is KQQQQQQQEQDAEGQQQQQKSGKSKSSATQK. Composition is skewed to polar residues over residues 219–231 and 238–248; these read DGQT…LKQS and SSSGSKFCTII. Residue Cys245 is modified to Cysteine methyl ester. Cys245 is lipidated: S-geranylgeranyl cysteine. A propeptide spans 246–248 (removed in mature form); sequence TII.

Belongs to the small GTPase superfamily. Ras family.

The protein resides in the cell membrane. The enzyme catalyses GTP + H2O = GDP + phosphate + H(+). With respect to regulation, alternates between an inactive form bound to GDP and an active form bound to GTP. Activated by a guanine nucleotide-exchange factor (GEF) and inactivated by a GTPase-activating protein (GAP). Ras-related protein which binds GDP/GTP and possesses intrinsic GTPase activity. Involved in both yeast and hypha development. In the yeast phase, it is required for normal (polar) bud site selection and is involved in cell morphogenesis; in the yeast-mycelial transition it is involved in germ tube emergence; and in the development of the hyphae it is involved in cell elongation. This Candida albicans (Yeast) protein is Ras-related protein RSR1 (RSR1).